A 214-amino-acid polypeptide reads, in one-letter code: Holliday junction branch migration complex subunit RuvA (214 aa).

The tract at residues 1-63 (MIASLSGTVE…EDALTLYGFA (63 aa)) is domain I. The segment at 64 to 142 (DRDEREVFEV…PTGEPVPGAE (79 aa)) is domain II. The tract at residues 143-151 (AEASDEPAV) is flexible linker. The domain III stretch occupies residues 151 to 214 (VETVWHADVV…GMAGAVRGGR (64 aa)).

It belongs to the RuvA family. Homotetramer. Forms an RuvA(8)-RuvB(12)-Holliday junction (HJ) complex. HJ DNA is sandwiched between 2 RuvA tetramers; dsDNA enters through RuvA and exits via RuvB. An RuvB hexamer assembles on each DNA strand where it exits the tetramer. Each RuvB hexamer is contacted by two RuvA subunits (via domain III) on 2 adjacent RuvB subunits; this complex drives branch migration. In the full resolvosome a probable DNA-RuvA(4)-RuvB(12)-RuvC(2) complex forms which resolves the HJ.

The protein resides in the cytoplasm. In terms of biological role, the RuvA-RuvB-RuvC complex processes Holliday junction (HJ) DNA during genetic recombination and DNA repair, while the RuvA-RuvB complex plays an important role in the rescue of blocked DNA replication forks via replication fork reversal (RFR). RuvA specifically binds to HJ cruciform DNA, conferring on it an open structure. The RuvB hexamer acts as an ATP-dependent pump, pulling dsDNA into and through the RuvAB complex. HJ branch migration allows RuvC to scan DNA until it finds its consensus sequence, where it cleaves and resolves the cruciform DNA. The protein is Holliday junction branch migration complex subunit RuvA of Micrococcus luteus (strain ATCC 4698 / DSM 20030 / JCM 1464 / CCM 169 / CCUG 5858 / IAM 1056 / NBRC 3333 / NCIMB 9278 / NCTC 2665 / VKM Ac-2230) (Micrococcus lysodeikticus).